The following is a 279-amino-acid chain: Protein CMSS1 (279 aa).

The span at 1 to 10 (MADDLGDEWW) shows a compositional bias: acidic residues. Residues 1–89 (MADDLGDEWW…DVLAKSEPKP (89 aa)) form a disordered region. Polar residues predominate over residues 12–22 (NQPTGAGSSPE). Residues S19 and S24 each carry the phosphoserine modification. Position 167 is an omega-N-methylarginine (R167). T212 is subject to Phosphothreonine.

This sequence belongs to the CMS1 family.

This is Protein CMSS1 (CMSS1) from Homo sapiens (Human).